We begin with the raw amino-acid sequence, 443 residues long: Ribosomal protein uS12 methylthiotransferase RimO (443 aa).

An MTTase N-terminal domain is found at 5 to 116; sequence PSVAVAHLGC…IVDVIQRAEA (112 aa). The [4Fe-4S] cluster site is built by Cys14, Cys50, Cys79, Cys154, Cys158, and Cys161. Positions 140–370 constitute a Radical SAM core domain; the sequence is TTTEGTAYVR…ALQQPISWQQ (231 aa). Residues 372–442 form the TRAM domain; that stretch reads QQEVGKTVQV…AYDLQGQLVS (71 aa).

It belongs to the methylthiotransferase family. RimO subfamily. [4Fe-4S] cluster serves as cofactor.

Its subcellular location is the cytoplasm. The enzyme catalyses L-aspartate(89)-[ribosomal protein uS12]-hydrogen + (sulfur carrier)-SH + AH2 + 2 S-adenosyl-L-methionine = 3-methylsulfanyl-L-aspartate(89)-[ribosomal protein uS12]-hydrogen + (sulfur carrier)-H + 5'-deoxyadenosine + L-methionine + A + S-adenosyl-L-homocysteine + 2 H(+). Its function is as follows. Catalyzes the methylthiolation of an aspartic acid residue of ribosomal protein uS12. This chain is Ribosomal protein uS12 methylthiotransferase RimO, found in Acaryochloris marina (strain MBIC 11017).